A 954-amino-acid chain; its full sequence is Mitogen-activated protein kinase kinase kinase 10 (954 aa).

The SH3 domain maps to 16–81 (PAGPVWTAVF…PSNYVAPGAP (66 aa)). The 263-residue stretch at 98–360 (LQLEEIIGVG…GSILKRLEVI (263 aa)) folds into the Protein kinase domain. Residues 104 to 112 (IGVGGFGKV) and Lys-125 each bind ATP. Asp-222 serves as the catalytic Proton acceptor. Thr-258 carries the phosphothreonine; by autocatalysis modification. The residue at position 262 (Ser-262) is a Phosphoserine; by autocatalysis and MAP4K1. Leucine-zipper regions lie at residues 384–405 (IQHM…EEEL) and 419–440 (LRRR…ELHL). Disordered regions lie at residues 490–665 (PTLD…RWGH), 716–739 (RFPR…PGLG), and 757–954 (STRS…HGSH). Residues Ser-498, Ser-502, and Ser-506 each carry the phosphoserine modification. Residues 501–511 (ASPPASPSIIP) show a composition bias toward low complexity. Thr-558 carries the phosphothreonine modification. Basic and acidic residues predominate over residues 566 to 578 (QKERVGGEERLKG). Acidic residues predominate over residues 611–620 (EMEEFAEAED). Over residues 631-640 (STPSYLSVPL) the composition is skewed to low complexity. The segment covering 773-790 (APSPPPSPPAPTPTPSPS) has biased composition (pro residues). Arg-857 bears the Omega-N-methylarginine mark. The span at 913-927 (PSRPDTPESPGPPSV) shows a compositional bias: pro residues.

It belongs to the protein kinase superfamily. STE Ser/Thr protein kinase family. MAP kinase kinase kinase subfamily. In terms of assembly, homodimer. Interacts with SH3RF2. Mg(2+) serves as cofactor. Post-translationally, autophosphorylation on serine and threonine residues within the activation loop plays a role in enzyme activation. As to expression, expressed in brain and skeletal muscle.

It carries out the reaction L-seryl-[protein] + ATP = O-phospho-L-seryl-[protein] + ADP + H(+). It catalyses the reaction L-threonyl-[protein] + ATP = O-phospho-L-threonyl-[protein] + ADP + H(+). Its activity is regulated as follows. Homodimerization via the leucine zipper domains is required for autophosphorylation and subsequent activation. In terms of biological role, activates the JUN N-terminal pathway. This Homo sapiens (Human) protein is Mitogen-activated protein kinase kinase kinase 10 (MAP3K10).